The following is a 120-amino-acid chain: NAD(P)H-quinone oxidoreductase subunit 3, chloroplastic (120 aa).

3 helical membrane passes run I9 to A29, M64 to M84, and V88 to L108.

It belongs to the complex I subunit 3 family. In terms of assembly, NDH is composed of at least 16 different subunits, 5 of which are encoded in the nucleus.

Its subcellular location is the plastid. The protein resides in the chloroplast thylakoid membrane. The enzyme catalyses a plastoquinone + NADH + (n+1) H(+)(in) = a plastoquinol + NAD(+) + n H(+)(out). It catalyses the reaction a plastoquinone + NADPH + (n+1) H(+)(in) = a plastoquinol + NADP(+) + n H(+)(out). Its function is as follows. NDH shuttles electrons from NAD(P)H:plastoquinone, via FMN and iron-sulfur (Fe-S) centers, to quinones in the photosynthetic chain and possibly in a chloroplast respiratory chain. The immediate electron acceptor for the enzyme in this species is believed to be plastoquinone. Couples the redox reaction to proton translocation, and thus conserves the redox energy in a proton gradient. The polypeptide is NAD(P)H-quinone oxidoreductase subunit 3, chloroplastic (Oryza nivara (Indian wild rice)).